Reading from the N-terminus, the 268-residue chain is E3 ubiquitin-protein ligase IAP-3 (268 aa).

BIR repeat units lie at residues 18-84 (KAAR…CPFV) and 111-178 (EAAR…CEYV). Zn(2+)-binding residues include cysteine 148, cysteine 151, histidine 168, and cysteine 175. The RING-type zinc-finger motif lies at 221–256 (CKICLGAEKTVCFVPCGHVVACGKCAAGVTTCPVCR).

Belongs to the IAP family. In terms of processing, auto-ubiquitinated.

The catalysed reaction is S-ubiquitinyl-[E2 ubiquitin-conjugating enzyme]-L-cysteine + [acceptor protein]-L-lysine = [E2 ubiquitin-conjugating enzyme]-L-cysteine + N(6)-ubiquitinyl-[acceptor protein]-L-lysine.. Its function is as follows. RING-finger E3 ubiquitin ligase required to prevent cellular apoptosis in infected cells. Ubiquitinates and subsequently targets host pro-apoptotic cellular proteins such as HID for degradation by the proteasome. This is E3 ubiquitin-protein ligase IAP-3 (IAP3) from Orgyia pseudotsugata multicapsid polyhedrosis virus (OpMNPV).